The following is a 67-amino-acid chain: Small ribosomal subunit protein bS21 (67 aa).

It belongs to the bacterial ribosomal protein bS21 family.

This chain is Small ribosomal subunit protein bS21 (rpsU), found in Aquifex aeolicus (strain VF5).